The chain runs to 142 residues: Hemoglobin subunit alpha (142 aa).

Residues 2–142 (VLSANDKSNV…VGNVLTSKYR (141 aa)) form the Globin domain. Histidine 59 serves as a coordination point for O2. Residue histidine 88 participates in heme b binding.

This sequence belongs to the globin family. As to quaternary structure, heterotetramer of two alpha chains and two beta chains. Red blood cells.

Its function is as follows. Involved in oxygen transport from the lung to the various peripheral tissues. This is Hemoglobin subunit alpha (HBA) from Aptenodytes forsteri (Emperor penguin).